We begin with the raw amino-acid sequence, 158 residues long: SsrA-binding protein (158 aa).

The protein belongs to the SmpB family.

It is found in the cytoplasm. Functionally, required for rescue of stalled ribosomes mediated by trans-translation. Binds to transfer-messenger RNA (tmRNA), required for stable association of tmRNA with ribosomes. tmRNA and SmpB together mimic tRNA shape, replacing the anticodon stem-loop with SmpB. tmRNA is encoded by the ssrA gene; the 2 termini fold to resemble tRNA(Ala) and it encodes a 'tag peptide', a short internal open reading frame. During trans-translation Ala-aminoacylated tmRNA acts like a tRNA, entering the A-site of stalled ribosomes, displacing the stalled mRNA. The ribosome then switches to translate the ORF on the tmRNA; the nascent peptide is terminated with the 'tag peptide' encoded by the tmRNA and targeted for degradation. The ribosome is freed to recommence translation, which seems to be the essential function of trans-translation. In Roseiflexus castenholzii (strain DSM 13941 / HLO8), this protein is SsrA-binding protein.